A 231-amino-acid polypeptide reads, in one-letter code: DNA mismatch repair protein MutH (231 aa).

It belongs to the MutH family.

The protein resides in the cytoplasm. In terms of biological role, sequence-specific endonuclease that cleaves unmethylated GATC sequences. It is involved in DNA mismatch repair. The protein is DNA mismatch repair protein MutH of Klebsiella pneumoniae (strain 342).